The chain runs to 400 residues: Renin (400 aa).

An N-terminal signal peptide occupies residues 1-17 (MPLWGLLLALWGCSTFS). A propeptide spans 18-59 (LPADTAAFRRIFLKKMPSVRESLKERGVDMAQLGAEWSQLTK) (activation peptide). N-linked (GlcNAc...) asparagine glycosylation is present at Asn-65. The Peptidase A1 domain occupies 80–397 (YYGEIGIGTP…DRRNNRIGFA (318 aa)). Asp-98 is an active-site residue. A disulfide bond links Cys-111 and Cys-118. N-linked (GlcNAc...) asparagine glycosylation occurs at Asn-135. A disulfide bridge connects residues Cys-277 and Cys-281. Residue Asp-286 is part of the active site. A disulfide bridge links Cys-320 with Cys-356. An N-linked (GlcNAc...) asparagine glycan is attached at Asn-353.

This sequence belongs to the peptidase A1 family. As to quaternary structure, interacts with ATP6AP2. In terms of tissue distribution, kidney.

The protein localises to the secreted. It localises to the membrane. The enzyme catalyses Cleavage of Leu-|-Xaa bond in angiotensinogen to generate angiotensin I.. Its activity is regulated as follows. Interaction with ATP6AP2 results in a 5-fold increased efficiency in angiotensinogen processing. Functionally, renin is a highly specific endopeptidase, whose only known function is to generate angiotensin I from angiotensinogen in the plasma, initiating a cascade of reactions that produce an elevation of blood pressure and increased sodium retention by the kidney. The protein is Renin (REN) of Ovis aries (Sheep).